Consider the following 114-residue polypeptide: Fluoride-specific ion channel FluC 1 (114 aa).

3 helical membrane-spanning segments follow: residues 28–48 (VFPW…GFLH), 56–76 (ILLL…TFQV), and 91–111 (IIYL…GSWL). Residues G66 and T69 each contribute to the Na(+) site.

Belongs to the fluoride channel Fluc/FEX (TC 1.A.43) family.

It localises to the cell membrane. It catalyses the reaction fluoride(in) = fluoride(out). Its activity is regulated as follows. Na(+) is not transported, but it plays an essential structural role and its presence is essential for fluoride channel function. Its function is as follows. Fluoride-specific ion channel. Important for reducing fluoride concentration in the cell, thus reducing its toxicity. This is Fluoride-specific ion channel FluC 1 from Ligilactobacillus salivarius (strain UCC118) (Lactobacillus salivarius).